Here is a 374-residue protein sequence, read N- to C-terminus: Ribonuclease D (374 aa).

Residues 6–171 (IISTTEDLKK…RATRVILLSK (166 aa)) form the 3'-5' exonuclease domain. An HRDC domain is found at 213–292 (DRKSIGVAQE…ARALNKKEVD (80 aa)).

This sequence belongs to the RNase D family. A divalent metal cation is required as a cofactor.

The protein resides in the cytoplasm. It catalyses the reaction Exonucleolytic cleavage that removes extra residues from the 3'-terminus of tRNA to produce 5'-mononucleotides.. Its function is as follows. Exonuclease involved in the 3' processing of various precursor tRNAs. Initiates hydrolysis at the 3'-terminus of an RNA molecule and releases 5'-mononucleotides. The polypeptide is Ribonuclease D (Desulfotalea psychrophila (strain LSv54 / DSM 12343)).